The primary structure comprises 114 residues: Small ribosomal subunit protein bS16 (114 aa).

The interval 87 to 114 is disordered; it reads AFREQPVQSAPKKKAQERAAERAKAAEA. Positions 100-114 are enriched in basic and acidic residues; it reads KAQERAAERAKAAEA.

The protein belongs to the bacterial ribosomal protein bS16 family.

The sequence is that of Small ribosomal subunit protein bS16 from Acidiphilium cryptum (strain JF-5).